The sequence spans 312 residues: Zygote arrest protein 1.L (312 aa).

Disordered regions lie at residues 79–133 (RDVG…VRFP) and 150–205 (FQDK…DQTR). Composition is skewed to polar residues over residues 86 to 95 (NPRQDASVQC) and 113 to 128 (PQQS…SPTK). The segment covering 152 to 196 (DKGENLSEKTEALRSEGSRGEGGRPEGKQEDGEIKEQTKMDKADQ) has biased composition (basic and acidic residues). A 3CxxC-type zinc finger spans residues 214–297 (KYGYYHCKDC…RQDLCGRCKG (84 aa)).

Belongs to the ZAR1 family. As to expression, ovary.

Its subcellular location is the cytoplasm. It is found in the cytoplasmic ribonucleoprotein granule. In terms of biological role, mRNA-binding protein required for maternal mRNA storage, translation and degradation during oocyte maturation. Probably promotes formation of some phase-separated membraneless compartment that stores maternal mRNAs in oocytes: acts by undergoing liquid-liquid phase separation upon binding to maternal mRNAs. Binds to the 3'-UTR of maternal mRNAs in immature oocytes, inhibiting their translation. In Xenopus laevis (African clawed frog), this protein is Zygote arrest protein 1.L.